The chain runs to 331 residues: Ferrochelatase (331 aa).

Residues His187 and Glu286 each coordinate Fe cation.

This sequence belongs to the ferrochelatase family.

It is found in the cytoplasm. The enzyme catalyses heme b + 2 H(+) = protoporphyrin IX + Fe(2+). The protein operates within porphyrin-containing compound metabolism; protoheme biosynthesis; protoheme from protoporphyrin-IX: step 1/1. Functionally, catalyzes the ferrous insertion into protoporphyrin IX. The protein is Ferrochelatase of Legionella pneumophila (strain Lens).